The chain runs to 1610 residues: MKKKSTDLYGRKNPGMQSMSGSFSSLQIALDESSSNFSTIYEPPDLSGLDAEMIVIVKNLQKRDIVTKCRALQDLIQWNDPSQFDNEQFLNALAVLFPRLSIEVERHVRLKIFVFMSVLSSALQKKLAPWLKFYITPWVMGFFDSDRAVSVSAKDSFKNLLSEEKWPHVWLKFGSTIAPIVTDVFLHEDKESLTDLRFFSNEEAESKVTRVKSSCLLTLSFLFKQTADLENLETDKKIDKQTFKSSLYENLSTLFKSDEFWSLVSSPQDGVTVSLSDLLLIILKYDKPFVTQYKEKYFKRVSRMISRLTSLTCVPMLRLLSNMISNFPNEVHQFANDSKRPLSKLFSNLITKRISLPNSGFYTSLLNLFKSIGAMQLVPSIESVDELCDAFLETANQEQRFLSTEVYDCLLNFLSFVYTDSSDPQIKDHVRDRLRTIFTRYFKGEFVLRCSTSDFDHCLQSVFDKNSDFASLWNEVLFGFFNDESMDIETIPFDSLSRNLSLTVQTVLYLKNRNFQTGNEVMSILGPCLSFLMKLSTHKNERIACLSASQLITVCHIFSDTTLIKPVKELFQKYLVNDLPSSILKLGPQSPAFTLLRDILLLLKDYADLSEPWENVANQFTVSFDELENIRVLNSLPSLFADGKLRGKISLVKTLVEYYDTAVFAIMQNPGNDWDMIRACIGSKEILVPEETIKNILFTTLEYFLTNDWVDNHLIILCASLHSLKAHLPTIFDENKSLYSLLPVILFSKPEDDGHVAAHFESIFSLLKEKALEDSGFSLKLCSEVQEWSLNKVLNGSINEKLAADKCVLVFNSFGKLPSNFFTFPASFWDAKISSCIPFFSNKLFIDQDFILGFLDLVASEPINVDMTDVGTQFVHIFHASLYTLYYVETTGCDGDALFNLTFAYLLIRIYLQNGIQSIIDVPIRDAGIFVESFECYFKGEVVKFMRDKDALTVLNELLIDDIDGKMPVLFKRFKNLSSAENTTSFSIFAAQGLTDFLIVVSNLLEMDEKHVDVVLGKLGLSSSKSPIFVSSILEGLKPLEVDSEIIQRIRFKAVNDLTGKLHSANEVSKSLLILNAATTQQITEKPLLPITRCRLFLENITNWCSESGIKSLELLPVCCFLRFMYYFLPTVFSLSGSYWNSIFDYIKYAMKMSVVDAPIVKSFELFALRLYNALSKNYEMNSDIKDCIVESNESMNYLLLKRFLFTHESTLRNSVTARMCNQYLVKLLENCPGKVVRSFQYQEFFPSLCNSNDLQMESVCMKFLREKLSHELKELTVYYMVESDYEPDVSLCPELLSLAIDFPGDPFVMVSKMEKYEHALRVYLLVWDLIFYHFEETTYNIKLSIINQLHAMDLLRPLLNTLVEILNLSYDRPINVDKYPKIDYNLMDYSSATDRIRCLAIHIYYQCLRHLSSSVRSYWSEVKNRAFTSTVESFTGYNVSPLLISASLDDVERSIESEDFQSVGDVNVKVNRNTREISFIYNVDEHKLEMAIKIPSVYPLQNVQVEGIERVGVNERQWRSWILASQSILSSQNGSITDALLVLKKNISMHFEGVEECAICYSVLSVERTLPNKRCGTCRHKFHASCLYKWFKSSNSSRCPLCRSSFTFV.

Basic and acidic residues predominate over residues 1–10 (MKKKSTDLYG). The segment at 1–20 (MKKKSTDLYGRKNPGMQSMS) is disordered. 12 HEAT repeats span residues 110-148 (LKIFVFMSVLSSALQKKLAPWLKFYITPWVMGFFDSDRA), 314-351 (VPMLRLLSNMISNFPNEVHQFANDSKRPLSKLFSNLIT), 372-408 (IGAMQLVPSIESVDELCDAFLETANQEQRFLSTEVYD), 409-443 (CLLNFLSFVYTDSSDPQIKDHVRDRLRTIFTRYFK), 590-626 (SPAFTLLRDILLLLKDYADLSEPWENVANQFTVSFDE), 627-664 (LENIRVLNSLPSLFADGKLRGKISLVKTLVEYYDTAVF), 736-773 (KSLYSLLPVILFSKPEDDGHVAAHFESIFSLLKEKALE), 965-1003 (GKMPVLFKRFKNLSSAENTTSFSIFAAQGLTDFLIVVSN), 1119-1156 (CCFLRFMYYFLPTVFSLSGSYWNSIFDYIKYAMKMSVV), 1322-1354 (RVYLLVWDLIFYHFEETTYNIKLSIINQLHAMD), 1355-1393 (LLRPLLNTLVEILNLSYDRPINVDKYPKIDYNLMDYSSA), and 1435-1473 (FTGYNVSPLLISASLDDVERSIESEDFQSVGDVNVKVNR). Residues 1558–1604 (CAICYSVLSVERTLPNKRCGTCRHKFHASCLYKWFKSSNSSRCPLCR) form an RING-type; atypical zinc finger.

The protein belongs to the LTN1 family. As to quaternary structure, component of the ribosome quality control complex (RQC), composed of the E3 ubiquitin ligase rkr1/ltn1, rqc1 and mtr1/rqc2, as well as cdc48 and its ubiquitin-binding cofactors. RQC forms a stable complex with 60S ribosomal subunits.

The protein resides in the nucleus. It localises to the cytoplasm. The protein localises to the cytosol. It catalyses the reaction S-ubiquitinyl-[E2 ubiquitin-conjugating enzyme]-L-cysteine + [acceptor protein]-L-lysine = [E2 ubiquitin-conjugating enzyme]-L-cysteine + N(6)-ubiquitinyl-[acceptor protein]-L-lysine.. The protein operates within protein modification; protein ubiquitination. Its function is as follows. E3 ubiquitin-protein ligase component of the ribosome quality control complex (RQC), a ribosome-associated complex that mediates ubiquitination and extraction of incompletely synthesized nascent chains for proteasomal degradation. Mediates ubiquitination of proteins derived from mRNAs lacking stop codons (non-stop proteins) and other translation arrest products induced by poly-lysine sequences and tandem rare codons. Ubiquitination leads to cdc48 recruitment for extraction and degradation of the incomplete translation product. May indirectly play a role in chromatin function and transcription. This Schizosaccharomyces pombe (strain 972 / ATCC 24843) (Fission yeast) protein is E3 ubiquitin-protein ligase listerin.